The sequence spans 331 residues: 6-phosphogluconolactonase (331 aa).

Belongs to the cycloisomerase 2 family.

The catalysed reaction is 6-phospho-D-glucono-1,5-lactone + H2O = 6-phospho-D-gluconate + H(+). It functions in the pathway carbohydrate degradation; pentose phosphate pathway; D-ribulose 5-phosphate from D-glucose 6-phosphate (oxidative stage): step 2/3. Functionally, catalyzes the hydrolysis of 6-phosphogluconolactone to 6-phosphogluconate. The sequence is that of 6-phosphogluconolactonase from Buchnera aphidicola subsp. Baizongia pistaciae (strain Bp).